The following is a 477-amino-acid chain: TNF receptor-associated factor family protein DDB_G0278133 (477 aa).

Residues 45–88 form an RING-type; degenerate zinc finger; it reads CDICTLELFIESEPKALQCKEGHLACRRCWERYLSTNKQCMTCK. 2 consecutive TRAF-type zinc fingers follow at residues 160–211 and 212–267; these read NHYK…SSLS and DHHK…SKMQ. Positions 271–326 form a coiled coil; the sequence is LEHSVTKLMNQNEIIKKDNQNLDQEKKIEEIKLKLNNLLNNYIQLKNEIAVLKQNS. The MATH domain occupies 331 to 463; the sequence is VYSNKWIIPE…FLNEKGELEI (133 aa).

It belongs to the TNF receptor-associated factor family. A subfamily.

It is found in the cytoplasm. Its function is as follows. Probable adapter protein and signal transducer that links members of the tumor necrosis factor receptor family to different signaling pathways by association with the receptor cytoplasmic domain and kinases. This is TNF receptor-associated factor family protein DDB_G0278133 from Dictyostelium discoideum (Social amoeba).